Here is an 89-residue protein sequence, read N- to C-terminus: Small ribosomal subunit protein uS15 (89 aa).

This sequence belongs to the universal ribosomal protein uS15 family. Part of the 30S ribosomal subunit. Forms a bridge to the 50S subunit in the 70S ribosome, contacting the 23S rRNA.

One of the primary rRNA binding proteins, it binds directly to 16S rRNA where it helps nucleate assembly of the platform of the 30S subunit by binding and bridging several RNA helices of the 16S rRNA. In terms of biological role, forms an intersubunit bridge (bridge B4) with the 23S rRNA of the 50S subunit in the ribosome. This is Small ribosomal subunit protein uS15 from Methylobacterium sp. (strain 4-46).